Consider the following 165-residue polypeptide: Glycine cleavage system H protein, mitochondrial (165 aa).

A mitochondrion-targeting transit peptide spans 1–31 (MALRIWASSTAKALRLSSASRPHFSPLFRCF). Residues 55–137 (VATIGITDHA…YEDGWMIKVK (83 aa)) enclose the Lipoyl-binding domain. An N6-lipoyllysine modification is found at Lys-96.

It belongs to the GcvH family. In terms of assembly, the glycine cleavage system is composed of four components that only loosely associate: the P protein (EC 1.4.4.2), the T protein (EC 2.1.2.10), the L protein (EC 1.8.1.4) and the lipoyl-bearing H protein. It depends on (R)-lipoate as a cofactor. As to expression, expressed in roots, stems and leaves.

It localises to the mitochondrion. The glycine cleavage system catalyzes the degradation of glycine. The H protein shuttles the methylamine group of glycine from the P protein to the T protein. In Flaveria trinervia (Clustered yellowtops), this protein is Glycine cleavage system H protein, mitochondrial (GDCSH).